The following is a 623-amino-acid chain: Membrane protein insertase YidC (623 aa).

The chain crosses the membrane as a helical span at residues 8–28; sequence LILATGLSFLVIMVWFFLFPP. The tract at residues 33-64 is disordered; sequence TEGEPTVATQQTAVAPSATPDAPTTAVPPDAD. Residues 44–62 show a composition bias toward low complexity; it reads TAVAPSATPDAPTTAVPPD. Helical transmembrane passes span 379–399, 449–469, 507–527, and 543–563; these read MGLA…PLAY, LPIL…FVTI, TTMA…SMWL, and IFAW…SGLV. Residues 601-617 show a composition bias toward low complexity; it reads KPAAQPAGKAANDGAAP. Positions 601–623 are disordered; it reads KPAAQPAGKAANDGAAPAKKRKP.

It belongs to the OXA1/ALB3/YidC family. Type 1 subfamily. As to quaternary structure, interacts with the Sec translocase complex via SecD. Specifically interacts with transmembrane segments of nascent integral membrane proteins during membrane integration.

Its subcellular location is the cell inner membrane. In terms of biological role, required for the insertion and/or proper folding and/or complex formation of integral membrane proteins into the membrane. Involved in integration of membrane proteins that insert both dependently and independently of the Sec translocase complex, as well as at least some lipoproteins. Aids folding of multispanning membrane proteins. In Cereibacter sphaeroides (strain KD131 / KCTC 12085) (Rhodobacter sphaeroides), this protein is Membrane protein insertase YidC.